The following is a 523-amino-acid chain: MLQEDKRELSESYFSKERLAEHHFRSYNAFLEHGMQDVVTEKERIETDIGDKEDEEPVWVELGDVRAVTPRVREADGSEELLYPQEARLRNITYSAPVFMEMSIVRGGEEEEERVLDTTETKVGRMPIMVGSDKCNISGFSDEELIEIGEDPADPGGYFIINGSERVLMTSEDLAPNKILAEYDSKYGDEIQVAKTFSQRRGYRALVLVERNREGLLEVSFPSVSGSISFVTLVRALGLESDEEIVHRVSEDPEIVKFMLENLEEADVQTQEEAIEDLGQRVASGQGKNYQLKRANYVIDRYLLPHLHEDGVEEEETRINKAYYLCRMAEACFELALGRREADDKDHYANKRLKVSGDLMKDLFRTALNKLARDVKYQLERANMRNRELTVNTVVRSDVLTERLEHPIATGNWVGGRSGVSQLVDRTDFMGVLSHLRRLRSPLSRSQPHFEARDLHATQWGRICPSETPEGPNCGLVKNFAQAMELSQDVDDERDLKQELSSMGVEGIPGISMETTSTTSADD.

The interval 501–523 is disordered; it reads SSMGVEGIPGISMETTSTTSADD. A compositionally biased stretch (polar residues) spans 513–523; sequence METTSTTSADD.

The protein belongs to the RNA polymerase beta chain family. As to quaternary structure, part of the RNA polymerase complex.

It localises to the cytoplasm. It catalyses the reaction RNA(n) + a ribonucleoside 5'-triphosphate = RNA(n+1) + diphosphate. Functionally, DNA-dependent RNA polymerase (RNAP) catalyzes the transcription of DNA into RNA using the four ribonucleoside triphosphates as substrates. The Rpo2 subunit (Rpo2N and Rpo2C in this organism) is implicated in DNA promoter recognition and in nucleotide binding. The protein is DNA-directed RNA polymerase subunit Rpo2N of Halobacterium salinarum (strain ATCC 29341 / DSM 671 / R1).